The following is a 283-amino-acid chain: S-methyl-5'-thioadenosine phosphorylase (283 aa).

Residue threonine 18 participates in phosphate binding. N6-acetyllysine is present on lysine 51. Phosphate-binding positions include 60 to 61 (RH) and 93 to 94 (TA). A substrate-binding site is contributed by methionine 196. Residue threonine 197 coordinates phosphate. 220–222 (DYD) contacts substrate.

Belongs to the PNP/MTAP phosphorylase family. MTAP subfamily. Homotrimer.

It localises to the cytoplasm. Its subcellular location is the nucleus. The enzyme catalyses S-methyl-5'-thioadenosine + phosphate = 5-(methylsulfanyl)-alpha-D-ribose 1-phosphate + adenine. The protein operates within amino-acid biosynthesis; L-methionine biosynthesis via salvage pathway; S-methyl-5-thio-alpha-D-ribose 1-phosphate from S-methyl-5'-thioadenosine (phosphorylase route): step 1/1. Functionally, catalyzes the reversible phosphorylation of S-methyl-5'-thioadenosine (MTA) to adenine and 5-methylthioribose-1-phosphate. Involved in the breakdown of MTA, a major by-product of polyamine biosynthesis. Responsible for the first step in the methionine salvage pathway after MTA has been generated from S-adenosylmethionine. Has broad substrate specificity with 6-aminopurine nucleosides as preferred substrates. The polypeptide is S-methyl-5'-thioadenosine phosphorylase (Bos taurus (Bovine)).